A 354-amino-acid polypeptide reads, in one-letter code: MTDTSVPTSTSPRLTSLSHGGGCGCKIAPGLLADLLKRSAPLPFFPDLLVGNDTADDAAVYKLNDEQAIVATTDFFMPIVDDPFDFGRIAATNALSDVYAMGGKPLMALAIVGMPINVLPHDVIAAVLKGGESVCAEAGIPLAGGHSIDSVEPIYGLVAIGVVDPKRVKRNAGAQAGDVLILGKPLGVGILSAALKKDRLDAAGYAAMIAATTKLNRPGAELSRLDGVHALTDITGFGLLGHTLELARGSNLTARVRYADLPWLPDVVGLAEAGIFTGASGRNWDAYGKSIGLPASLPATARTLLTDPQTSGGLLVSCAPQAVDEVLALFRADGFGEACVIGEMVSGEGRVEVV.

Cys-23 is a catalytic residue. Residues Lys-26 and 54 to 56 (TAD) each bind ATP. Asp-57 contacts Mg(2+). Residues Asp-74, Asp-97, and 145-147 (GHS) contribute to the ATP site. Asp-97 is a Mg(2+) binding site. Asp-233 lines the Mg(2+) pocket.

It belongs to the selenophosphate synthase 1 family. Class I subfamily. Homodimer. It depends on Mg(2+) as a cofactor.

It catalyses the reaction hydrogenselenide + ATP + H2O = selenophosphate + AMP + phosphate + 2 H(+). Synthesizes selenophosphate from selenide and ATP. The sequence is that of Selenide, water dikinase from Paraburkholderia xenovorans (strain LB400).